The following is a 452-amino-acid chain: tRNA modification GTPase MnmE (452 aa).

(6S)-5-formyl-5,6,7,8-tetrahydrofolate is bound by residues arginine 22, glutamate 79, and lysine 119. In terms of domain architecture, TrmE-type G spans 215–375; that stretch reads GMKVVIAGRP…LRQHLKQSMG (161 aa). Residue asparagine 225 participates in K(+) binding. Residues 225-230, 244-250, 269-272, and 333-336 each bind GTP; these read NAGKSS, TDIAGTT, DTAG, and NKAD. A Mg(2+)-binding site is contributed by serine 229. 3 residues coordinate K(+): threonine 244, isoleucine 246, and threonine 249. Threonine 250 is a Mg(2+) binding site. Lysine 452 contacts (6S)-5-formyl-5,6,7,8-tetrahydrofolate.

It belongs to the TRAFAC class TrmE-Era-EngA-EngB-Septin-like GTPase superfamily. TrmE GTPase family. Homodimer. Heterotetramer of two MnmE and two MnmG subunits. K(+) serves as cofactor.

Its subcellular location is the cytoplasm. Exhibits a very high intrinsic GTPase hydrolysis rate. Involved in the addition of a carboxymethylaminomethyl (cmnm) group at the wobble position (U34) of certain tRNAs, forming tRNA-cmnm(5)s(2)U34. The protein is tRNA modification GTPase MnmE of Histophilus somni (strain 2336) (Haemophilus somnus).